The chain runs to 88 residues: Small ribosomal subunit protein bS20 (88 aa).

This sequence belongs to the bacterial ribosomal protein bS20 family.

Its function is as follows. Binds directly to 16S ribosomal RNA. The sequence is that of Small ribosomal subunit protein bS20 from Clostridium botulinum (strain 657 / Type Ba4).